The chain runs to 300 residues: PTB domain-containing engulfment adapter protein 1 (300 aa).

The 156-residue stretch at 21–176 (AKHFIPYNAK…GGLQKRIQDL (156 aa)) folds into the PID domain. The stretch at 160-199 (VETRKQIGGLQKRIQDLETENVELKKQLQVLEEQLMIAQV) forms a coiled coil.

This sequence belongs to the ced-6 family.

It is found in the cytoplasm. May function as an adapter protein. Required for efficient phagocytosis of apoptotic cells. May play a role in the internalization and endosomal trafficking of various lrp1 ligands. The polypeptide is PTB domain-containing engulfment adapter protein 1 (gulp1) (Danio rerio (Zebrafish)).